A 29-amino-acid chain; its full sequence is Cyclotide mang-A (29 aa).

Residues 1–29 (GFPTCGETCTLGTCNTPGCTCSWPICTRD) constitute a cross-link (cyclopeptide (Gly-Asp)). Cystine bridges form between C5-C19, C9-C21, and C14-C26.

Belongs to the cyclotide family. Moebius subfamily. This is a cyclic peptide.

In terms of biological role, probably participates in a plant defense mechanism. This is Cyclotide mang-A from Melicytus angustifolius (Hymenanthera angustifolia).